We begin with the raw amino-acid sequence, 198 residues long: Putative coiled-coil domain-containing protein 196 (198 aa).

The stretch at 24–117 (NYLKELNEDL…RKEMEMLWNK (94 aa)) forms a coiled coil. 2 stretches are compositionally biased toward basic and acidic residues: residues 135 to 144 (NKTDLQDGKA) and 154 to 167 (TKNELETLCAEKGK). The segment at 135-198 (NKTDLQDGKA…VSGTSQHHSE (64 aa)) is disordered. Polar residues predominate over residues 187–198 (GQVSGTSQHHSE).

The chain is Putative coiled-coil domain-containing protein 196 from Bos taurus (Bovine).